Consider the following 78-residue polypeptide: Omega-conotoxin-like ArMKLT1-011 (78 aa).

The signal sequence occupies residues Met1 to Ala22. Residues Val23–Asp48 constitute a propeptide that is removed on maturation. Disulfide bonds link Cys52–Cys69, Cys59–Cys73, and Cys68–Cys77.

It belongs to the conotoxin O1 superfamily. As to expression, expressed by the venom duct.

Its subcellular location is the secreted. Its function is as follows. Omega-conotoxins act at presynaptic membranes, they bind and block voltage-gated calcium channels (Cav). The polypeptide is Omega-conotoxin-like ArMKLT1-011 (Conus arenatus (Sand-dusted cone)).